The following is an 800-amino-acid chain: Probable replication endonuclease from prophage-like region (800 aa).

Catalysis depends on O-(5'-phospho-DNA)-tyrosine intermediate residues Tyr503 and Tyr507.

The protein belongs to the phage GPA family.

Possible endonuclease which induces a single-strand cut and initiates DNA replication. The chain is Probable replication endonuclease from prophage-like region from Salmonella paratyphi A (strain ATCC 9150 / SARB42).